The primary structure comprises 287 residues: Glutamate racemase (287 aa).

Over residues 1 to 15 (MATKPQDANTTSREA) the composition is skewed to polar residues. The disordered stretch occupies residues 1–25 (MATKPQDANTTSREAITSKADSPPR). Substrate-binding positions include 32–33 (DS) and 64–65 (YG). The Proton donor/acceptor role is filled by cysteine 96. Position 97 to 98 (97 to 98 (NT)) interacts with substrate. The active-site Proton donor/acceptor is cysteine 208. Residue 209 to 210 (TH) participates in substrate binding.

This sequence belongs to the aspartate/glutamate racemases family.

The catalysed reaction is L-glutamate = D-glutamate. It participates in cell wall biogenesis; peptidoglycan biosynthesis. Functionally, provides the (R)-glutamate required for cell wall biosynthesis. This Yersinia pseudotuberculosis serotype I (strain IP32953) protein is Glutamate racemase.